Here is a 633-residue protein sequence, read N- to C-terminus: Chitin synthase regulatory factor 4 (633 aa).

The interval 121–151 is disordered; the sequence is ATSSQETKRDRPLPNIRNSAPSATRSHSTPC. Residues 136–149 are compositionally biased toward polar residues; the sequence is IRNSAPSATRSHST. Serine 148 bears the Phosphoserine mark. Sel1-like repeat units follow at residues 278–314, 315–346, 438–474, 475–511, and 512–543; these read AKAM…NLGY, TRSL…SEND, SSAQ…KRGE, TEAD…MAGN, and ANAQ…KAGH. The segment at 583–613 is disordered; it reads ASETSPPHAPAVSSTPVTSAPPVSQTKVTKV. Low complexity predominate over residues 592–613; sequence PAVSSTPVTSAPPVSQTKVTKV.

Its subcellular location is the cytoplasm. Functionally, involved in septum formation. Required for the proper localization of chs2 at the septum. This is Chitin synthase regulatory factor 4 (chr4) from Schizosaccharomyces pombe (strain 972 / ATCC 24843) (Fission yeast).